Consider the following 144-residue polypeptide: Large ribosomal subunit protein uL15 (144 aa).

Residues 1–52 (MIKLESLQDPSPRKRRKKLLGRGPGSGHGKTSGRGHKGDGSRSGYKRRFGYE) form a disordered region. Gly residues predominate over residues 22-32 (RGPGSGHGKTS).

This sequence belongs to the universal ribosomal protein uL15 family. In terms of assembly, part of the 50S ribosomal subunit.

Functionally, binds to the 23S rRNA. This Chlamydia felis (strain Fe/C-56) (Chlamydophila felis) protein is Large ribosomal subunit protein uL15.